Here is a 370-residue protein sequence, read N- to C-terminus: Phospho-N-acetylmuramoyl-pentapeptide-transferase (370 aa).

10 helical membrane-spanning segments follow: residues 31–51 (LTSMFVTFWLGHKVIDFLYGL), 73–93 (TMGGLLIIGSLLLSVLLWGNL), 98–118 (IIVLSVFALCFSALGFADDYM), 135–155 (LLSILISLVFCILFFYYTGVI), 177–197 (GPVLALGVFAIPFSILVIIGS), 209–229 (GLATGTVAISVVTLGIIAYVS), 251–271 (VFLSALAGALFGFLWFNAHPA), 273–293 (VFMGDTGSLFLGATLGMIVIL), 298–318 (ILLLILGAIFVSEALSVILQV), and 347–367 (KIVIRFWIIAVILAIISLSTL).

The protein belongs to the glycosyltransferase 4 family. MraY subfamily. It depends on Mg(2+) as a cofactor.

The protein localises to the cell inner membrane. The enzyme catalyses UDP-N-acetyl-alpha-D-muramoyl-L-alanyl-gamma-D-glutamyl-meso-2,6-diaminopimeloyl-D-alanyl-D-alanine + di-trans,octa-cis-undecaprenyl phosphate = di-trans,octa-cis-undecaprenyl diphospho-N-acetyl-alpha-D-muramoyl-L-alanyl-D-glutamyl-meso-2,6-diaminopimeloyl-D-alanyl-D-alanine + UMP. The protein operates within cell wall biogenesis; peptidoglycan biosynthesis. Functionally, catalyzes the initial step of the lipid cycle reactions in the biosynthesis of the cell wall peptidoglycan: transfers peptidoglycan precursor phospho-MurNAc-pentapeptide from UDP-MurNAc-pentapeptide onto the lipid carrier undecaprenyl phosphate, yielding undecaprenyl-pyrophosphoryl-MurNAc-pentapeptide, known as lipid I. This chain is Phospho-N-acetylmuramoyl-pentapeptide-transferase, found in Leptospira borgpetersenii serovar Hardjo-bovis (strain JB197).